The primary structure comprises 241 residues: uncharacterized protein (241 aa).

The next 7 helical transmembrane spans lie at 12 to 32, 39 to 59, 89 to 109, 117 to 137, 152 to 172, 180 to 200, and 215 to 235; these read ITEI…LLLL, LLWL…EMKF, VYDV…ICYT, YYTF…NCVV, LFEY…ATML, IHFY…WFVY, and YVEA…SPLI.

It belongs to the mimivirus L68/R809 family.

It is found in the membrane. This is an uncharacterized protein from Acanthamoeba polyphaga mimivirus (APMV).